Consider the following 386-residue polypeptide: Bifunctional enzyme IspD/IspF (386 aa).

The interval 1-229 (MIRGERVIGI…RARALLEAPV (229 aa)) is 2-C-methyl-D-erythritol 4-phosphate cytidylyltransferase. A 2-C-methyl-D-erythritol 2,4-cyclodiphosphate synthase region spans residues 230–386 (ATGVGYDTHR…AIALLVRAAG (157 aa)). Residues D236 and H238 each contribute to the a divalent metal cation site. Residues 236–238 (DTH) and 261–262 (HS) contribute to the 4-CDP-2-C-methyl-D-erythritol 2-phosphate site. H269 is an a divalent metal cation binding site. 4-CDP-2-C-methyl-D-erythritol 2-phosphate is bound by residues 283-285 (DLG), 288-292 (FPDTD), 359-362 (TTGE), F366, and R369.

It in the N-terminal section; belongs to the IspD/TarI cytidylyltransferase family. IspD subfamily. This sequence in the C-terminal section; belongs to the IspF family. It depends on a divalent metal cation as a cofactor.

It catalyses the reaction 2-C-methyl-D-erythritol 4-phosphate + CTP + H(+) = 4-CDP-2-C-methyl-D-erythritol + diphosphate. It carries out the reaction 4-CDP-2-C-methyl-D-erythritol 2-phosphate = 2-C-methyl-D-erythritol 2,4-cyclic diphosphate + CMP. The protein operates within isoprenoid biosynthesis; isopentenyl diphosphate biosynthesis via DXP pathway; isopentenyl diphosphate from 1-deoxy-D-xylulose 5-phosphate: step 2/6. It functions in the pathway isoprenoid biosynthesis; isopentenyl diphosphate biosynthesis via DXP pathway; isopentenyl diphosphate from 1-deoxy-D-xylulose 5-phosphate: step 4/6. Its function is as follows. Bifunctional enzyme that catalyzes the formation of 4-diphosphocytidyl-2-C-methyl-D-erythritol from CTP and 2-C-methyl-D-erythritol 4-phosphate (MEP) (IspD), and catalyzes the conversion of 4-diphosphocytidyl-2-C-methyl-D-erythritol 2-phosphate (CDP-ME2P) to 2-C-methyl-D-erythritol 2,4-cyclodiphosphate (ME-CPP) with a corresponding release of cytidine 5-monophosphate (CMP) (IspF). The sequence is that of Bifunctional enzyme IspD/IspF from Anaeromyxobacter dehalogenans (strain 2CP-C).